The primary structure comprises 210 residues: Regulator of G-protein signaling 17 (210 aa).

The tract at residues 1-21 (MRKRQQSQNEGTSAVSQAPGN) is disordered. The RGS domain occupies 84–200 (NFDKMMKTPA…LNSQIYKSLV (117 aa)).

As to quaternary structure, interacts with GNAI1 and GNAQ. Interacts with GNAZ and GNAI2. Forms a complex with mu-opioid receptors and G(alpha)z/i2 subunits, including GNAZ and GNAI2; the formation of this complex results in mu-opioid receptor desensitization. Post-translationally, N- and O-glycosylated in synapsomal membranes. In terms of processing, serine phosphorylated in synapsomal membranes. Sumoylated with SUMO1 and SUM02 in synaptosomes. The sumoylated forms act as a scaffold for sequestering mu-opioid receptor-activated G(alpha) subunits.

It localises to the membrane. Its subcellular location is the synapse. The protein resides in the synaptosome. It is found in the nucleus. The protein localises to the cytoplasm. Functionally, regulates G protein-coupled receptor signaling cascades, including signaling via muscarinic acetylcholine receptor CHRM2 and dopamine receptor DRD2. Inhibits signal transduction by increasing the GTPase activity of G protein alpha subunits, thereby driving them into their inactive GDP-bound form. Binds selectively to GNAZ and GNAI2 subunits, accelerates their GTPase activity and regulates their signaling activities. Negatively regulates mu-opioid receptor-mediated activation of the G-proteins. This is Regulator of G-protein signaling 17 (RGS17) from Gallus gallus (Chicken).